Reading from the N-terminus, the 239-residue chain is Superoxide dismutase 1 copper chaperone (239 aa).

An HMA domain is found at 7 to 70; the sequence is FYEATYAVPM…ALRDCGRDAI (64 aa). Cu cation contacts are provided by C18 and C21. A disulfide bridge connects residues C28 and C65. D163 contributes to the Zn(2+) binding site. Cu cation contacts are provided by C219 and C221.

Belongs to the CCS1 family. The cofactor is Cu(2+).

Its subcellular location is the cytoplasm. Its function is as follows. Copper chaperone for superoxide dismutase 1 (SOD1). Binds copper ions and delivers them specifically to SOD1. The chain is Superoxide dismutase 1 copper chaperone (CCS1) from Candida glabrata (strain ATCC 2001 / BCRC 20586 / JCM 3761 / NBRC 0622 / NRRL Y-65 / CBS 138) (Yeast).